Reading from the N-terminus, the 324-residue chain is DNA repair and recombination protein RadA (324 aa).

Position 114–121 (114–121) interacts with ATP; it reads GEFGSGKT.

This sequence belongs to the eukaryotic RecA-like protein family.

In terms of biological role, involved in DNA repair and in homologous recombination. Binds and assemble on single-stranded DNA to form a nucleoprotein filament. Hydrolyzes ATP in a ssDNA-dependent manner and promotes DNA strand exchange between homologous DNA molecules. The chain is DNA repair and recombination protein RadA from Sulfurisphaera tokodaii (strain DSM 16993 / JCM 10545 / NBRC 100140 / 7) (Sulfolobus tokodaii).